Consider the following 935-residue polypeptide: Phosphoenolpyruvate carboxylase (935 aa).

Active-site residues include histidine 161 and lysine 593.

Belongs to the PEPCase type 1 family. The cofactor is Mg(2+).

The catalysed reaction is oxaloacetate + phosphate = phosphoenolpyruvate + hydrogencarbonate. Its function is as follows. Forms oxaloacetate, a four-carbon dicarboxylic acid source for the tricarboxylic acid cycle. The sequence is that of Phosphoenolpyruvate carboxylase from Mycolicibacterium paratuberculosis (strain ATCC BAA-968 / K-10) (Mycobacterium paratuberculosis).